The following is a 181-amino-acid chain: Small ribosomal subunit protein uS4 (181 aa).

Residues 108–172 enclose the S4 RNA-binding domain; it reads RRLQTQVYRR…SPLVSDIHSE (65 aa).

This sequence belongs to the universal ribosomal protein uS4 family. Part of the 30S ribosomal subunit. Contacts protein S5. The interaction surface between S4 and S5 is involved in control of translational fidelity.

Its function is as follows. One of the primary rRNA binding proteins, it binds directly to 16S rRNA where it nucleates assembly of the body of the 30S subunit. With S5 and S12 plays an important role in translational accuracy. The sequence is that of Small ribosomal subunit protein uS4 from Methanospirillum hungatei JF-1 (strain ATCC 27890 / DSM 864 / NBRC 100397 / JF-1).